Reading from the N-terminus, the 223-residue chain is Ribose-5-phosphate isomerase A (223 aa).

Residues 26-29, 82-85, and 95-98 each bind substrate; these read TGST, DGAD, and KGGG. The active-site Proton acceptor is Glu104. A substrate-binding site is contributed by Lys122.

The protein belongs to the ribose 5-phosphate isomerase family. Homodimer.

The catalysed reaction is aldehydo-D-ribose 5-phosphate = D-ribulose 5-phosphate. It functions in the pathway carbohydrate degradation; pentose phosphate pathway; D-ribose 5-phosphate from D-ribulose 5-phosphate (non-oxidative stage): step 1/1. In terms of biological role, catalyzes the reversible conversion of ribose-5-phosphate to ribulose 5-phosphate. The protein is Ribose-5-phosphate isomerase A of Streptococcus agalactiae serotype III (strain NEM316).